Reading from the N-terminus, the 573-residue chain is FAD-dependent monooxygenase resA (573 aa).

An N-terminal signal peptide occupies residues M1–A17. Position 106 (I106) interacts with FAD. N235 carries N-linked (GlcNAc...) asparagine glycosylation.

It belongs to the FAD-binding monooxygenase family. Requires FAD as cofactor.

The protein operates within antifungal biosynthesis. Functionally, FAD-dependent monooxygenase; part of the gene cluster that mediates the biosynthesis of the tetrahydropyranyl antifungal agent restricticin that acts as an inhibitor of CYP51 and blocks the ergosterol biosynthesis. The highly reducing polyketide synthase resH, the short chain dehydrogenase resG, the cyclase resF, the FAD-dependent monooxygenase resA and the enoylreductase resD are required to generate the first stable intermediate desmethylrestrictinol. ResH with resD biosynthesize the first polyketide chain intermediate that is reduced by resG, followed by epoxidation by resA before 6-endo cyclization via epoxide opening by resF leads to desmethylrestrictinol. The methyltransferase resE then catalyzes the C4 O-methylation of desmethylrestrictinol to produce restrictinol, and the nonribosomal peptide synthetase resC catalyzes the C3 esterification of restrictinol with glycine that leads to restricticin. This chain is FAD-dependent monooxygenase resA, found in Aspergillus sclerotiorum.